The following is a 280-amino-acid chain: Energy-coupling factor transporter ATP-binding protein EcfA1 (280 aa).

Residues 6–241 (LRTENISFQY…SHMLQEIGLD (236 aa)) enclose the ABC transporter domain. 40 to 47 (GQNGSGKS) serves as a coordination point for ATP.

Belongs to the ABC transporter superfamily. Energy-coupling factor EcfA family. In terms of assembly, forms a stable energy-coupling factor (ECF) transporter complex composed of 2 membrane-embedded substrate-binding proteins (S component), 2 ATP-binding proteins (A component) and 2 transmembrane proteins (T component).

It localises to the cell membrane. In terms of biological role, ATP-binding (A) component of a common energy-coupling factor (ECF) ABC-transporter complex. Unlike classic ABC transporters this ECF transporter provides the energy necessary to transport a number of different substrates. This is Energy-coupling factor transporter ATP-binding protein EcfA1 from Bacillus thuringiensis subsp. konkukian (strain 97-27).